A 357-amino-acid polypeptide reads, in one-letter code: Geranylgeranyl pyrophosphate synthase spyE (357 aa).

Residues 36–60 (EAQSQAVPGTRTETEPTGSSPSDLQ) are disordered. Residues 50–59 (EPTGSSPSDL) show a composition bias toward polar residues. Isopentenyl diphosphate-binding residues include Lys-84, Arg-87, and His-116. Asp-123 and Asp-127 together coordinate Mg(2+). Arg-132 provides a ligand contact to dimethylallyl diphosphate. Arg-133 is an isopentenyl diphosphate binding site. 3 residues coordinate dimethylallyl diphosphate: Lys-210, Thr-211, and Gln-244. A Mg(2+)-binding site is contributed by Asp-247. Dimethylallyl diphosphate is bound by residues Asn-251, Lys-261, and Lys-271.

The protein belongs to the FPP/GGPP synthase family. The cofactor is Mg(2+).

The enzyme catalyses isopentenyl diphosphate + dimethylallyl diphosphate = (2E)-geranyl diphosphate + diphosphate. It carries out the reaction isopentenyl diphosphate + (2E)-geranyl diphosphate = (2E,6E)-farnesyl diphosphate + diphosphate. The catalysed reaction is isopentenyl diphosphate + (2E,6E)-farnesyl diphosphate = (2E,6E,10E)-geranylgeranyl diphosphate + diphosphate. The protein operates within secondary metabolite biosynthesis; terpenoid biosynthesis. Functionally, geranylgeranyl pyrophosphate synthase; part of the gene cluster that mediates the biosynthesis of meroterpenoids called sartorypyrones. Within the pathway, spyE provides the spyF cosubstrate geranylgeranyl pyrophosphate (GGPP) for the prenylation of triacetic acid lactone (TAL). The biosynthesis of sartorypyrones begins with the production of triacetic acid lactone (TAL) by the NR-PKS spyA using one molecule of acetyl-CoA and two molecules of malonyl-CoA. The prenyltransferase spyF then conjugates geranylgeranyl pyrophosphate (GGPP) to TAL to form geranylgeranyl-triacetate lactone, for which the pathway-specific geranylgeranyl pyrophosphate synthase (GGPS) spyE is required to provide GGPP. Subsequently, geranylgeranyl-triacetate lactone is epoxidized at the terminal olein by the FAD-dependent monooxygenase spyC, followed by cyclization of the terpenoid component catalyzed by the terpene cyclase spyD to produce both the bicyclic sartorypyrone F and the monocyclic sartorypyrone D. Finally, the last step of the biosynthesis involves the acetylation of the meroterpenoids sartorypyrones D and F by the acetyltransferase SpyB to produce sartorypyrones A and G, respectively. The protein is Geranylgeranyl pyrophosphate synthase spyE of Aspergillus fumigatus (strain ATCC MYA-4609 / CBS 101355 / FGSC A1100 / Af293) (Neosartorya fumigata).